A 333-amino-acid chain; its full sequence is Glyceraldehyde-3-phosphate dehydrogenase (333 aa).

NAD(+)-binding positions include 11-12, Asp-35, Met-79, and Ser-121; that span reads RI. D-glyceraldehyde 3-phosphate contacts are provided by residues 150–152, Thr-181, 210–211, and Arg-233; these read SCT and TG. The Nucleophile role is filled by Cys-151. Asn-315 contacts NAD(+).

This sequence belongs to the glyceraldehyde-3-phosphate dehydrogenase family. In terms of assembly, homotetramer.

Its subcellular location is the cytoplasm. It carries out the reaction D-glyceraldehyde 3-phosphate + phosphate + NAD(+) = (2R)-3-phospho-glyceroyl phosphate + NADH + H(+). Its pathway is carbohydrate degradation; glycolysis; pyruvate from D-glyceraldehyde 3-phosphate: step 1/5. Functionally, catalyzes the oxidative phosphorylation of glyceraldehyde 3-phosphate (G3P) to 1,3-bisphosphoglycerate (BPG) using the cofactor NAD. The first reaction step involves the formation of a hemiacetal intermediate between G3P and a cysteine residue, and this hemiacetal intermediate is then oxidized to a thioester, with concomitant reduction of NAD to NADH. The reduced NADH is then exchanged with the second NAD, and the thioester is attacked by a nucleophilic inorganic phosphate to produce BPG. This Bacteroides fragilis (strain YCH46) protein is Glyceraldehyde-3-phosphate dehydrogenase (gap).